The primary structure comprises 201 residues: Imidazole glycerol phosphate synthase subunit HisH (201 aa).

The Glutamine amidotransferase type-1 domain maps to 1 to 201 (MIIVIDYDAG…ILKKFVDLCD (201 aa)). The active-site Nucleophile is the Cys79. Catalysis depends on residues His181 and Glu183.

As to quaternary structure, heterodimer of HisH and HisF.

The protein resides in the cytoplasm. It catalyses the reaction 5-[(5-phospho-1-deoxy-D-ribulos-1-ylimino)methylamino]-1-(5-phospho-beta-D-ribosyl)imidazole-4-carboxamide + L-glutamine = D-erythro-1-(imidazol-4-yl)glycerol 3-phosphate + 5-amino-1-(5-phospho-beta-D-ribosyl)imidazole-4-carboxamide + L-glutamate + H(+). The catalysed reaction is L-glutamine + H2O = L-glutamate + NH4(+). The protein operates within amino-acid biosynthesis; L-histidine biosynthesis; L-histidine from 5-phospho-alpha-D-ribose 1-diphosphate: step 5/9. In terms of biological role, IGPS catalyzes the conversion of PRFAR and glutamine to IGP, AICAR and glutamate. The HisH subunit catalyzes the hydrolysis of glutamine to glutamate and ammonia as part of the synthesis of IGP and AICAR. The resulting ammonia molecule is channeled to the active site of HisF. The sequence is that of Imidazole glycerol phosphate synthase subunit HisH from Streptococcus mutans serotype c (strain ATCC 700610 / UA159).